Here is a 201-residue protein sequence, read N- to C-terminus: Small ribosomal subunit protein uS4c (201 aa).

Residues Ser23 to Ser42 form a disordered region. The region spanning Met89–Tyr151 is the S4 RNA-binding domain.

It belongs to the universal ribosomal protein uS4 family. Part of the 30S ribosomal subunit. Contacts protein S5. The interaction surface between S4 and S5 is involved in control of translational fidelity.

Its subcellular location is the plastid. The protein localises to the chloroplast. Functionally, one of the primary rRNA binding proteins, it binds directly to 16S rRNA where it nucleates assembly of the body of the 30S subunit. In terms of biological role, with S5 and S12 plays an important role in translational accuracy. The sequence is that of Small ribosomal subunit protein uS4c (rps4) from Morus indica (Mulberry).